A 307-amino-acid polypeptide reads, in one-letter code: Peroxisomal membrane protein PMP34 (307 aa).

Over 1–9 (MASVLSYES) the chain is Cytoplasmic. Residues 1–147 (MASVLSYESL…NEDIIPTNYK (147 aa)) form a necessary for targeting to peroxisomes and interaction with PEX19 region. Solcar repeat units follow at residues 7 to 92 (YESL…LKAV), 99 to 192 (SSTG…LKRQ), and 200 to 294 (LSSL…LTAA). The helical transmembrane segment at 10-30 (LVHAVAGAVGSVTAMTVFFPL) threads the bilayer. The Lumenal portion of the chain corresponds to 31-66 (DTARLRLQVDEKRKSKTTHAVLLEIIKEEGLLAPYR). Residues 67 to 87 (GWFPVISSLCCSNFVYFYTFN) traverse the membrane as a helical segment. The Cytoplasmic portion of the chain corresponds to 88-104 (SLKAVWVKGQRSSTGKD). The helical transmembrane segment at 105 to 125 (LVVGFVAGVVNVLLTTPLWVV) threads the bilayer. At 126–160 (NTRLKLQGAKFRNEDIIPTNYKGIIDAFHQIIRDE) the chain is on the lumenal side. The chain crosses the membrane as a helical span at residues 161-181 (GILALWNGTFPSLLLVFNPAI). Over 182-202 (QFMFYEGLKRQLLKKRMKLSS) the chain is Cytoplasmic. The short motif at 190–199 (KRQLLKKRMK) is the Peroxisome localization signal element. Residues 203 to 223 (LDVFIIGAIAKAIATTVTYPM) form a helical membrane-spanning segment. The Lumenal segment spans residues 224 to 280 (QTVQSILRFGRHRLNPENRTLGSLRNVLSLLHQRVKRFGIMGLYKGLEAKLLQTVLT). Positions 244–307 (LGSLRNVLSL…VMGLKSTHKH (64 aa)) are necessary for targeting to peroxisomes and interaction with PEX19. The chain crosses the membrane as a helical span at residues 281–301 (AALMFLVYEKLTAATFTVMGL). Residues 302-307 (KSTHKH) are Cytoplasmic-facing.

It belongs to the mitochondrial carrier (TC 2.A.29) family. As to quaternary structure, interacts (via N- and C-terminus peroxisomal targeting regions) with PEX19; the interaction occurs with the newly synthesized SLC25A17 in the cytosol. In terms of tissue distribution, expressed in liver, kidney, heart, spleen, muscle and lung.

It is found in the cytoplasm. Its subcellular location is the peroxisome membrane. The enzyme catalyses AMP(out) + CoA(in) = AMP(in) + CoA(out). It catalyses the reaction 3'-dephospho-CoA(in) + AMP(out) = 3'-dephospho-CoA(out) + AMP(in). The catalysed reaction is acetyl-CoA(in) + AMP(out) = acetyl-CoA(out) + AMP(in). It carries out the reaction AMP(in) + NAD(+)(out) = AMP(out) + NAD(+)(in). The enzyme catalyses FAD(in) + AMP(out) = FAD(out) + AMP(in). It catalyses the reaction FMN(in) + AMP(out) = FMN(out) + AMP(in). The catalysed reaction is AMP(in) + ADP(out) = AMP(out) + ADP(in). It carries out the reaction adenosine 3',5'-bisphosphate(in) + AMP(out) = adenosine 3',5'-bisphosphate(out) + AMP(in). The enzyme catalyses FAD(in) + CoA(out) = FAD(out) + CoA(in). It catalyses the reaction FAD(in) + adenosine 3',5'-bisphosphate(out) = FAD(out) + adenosine 3',5'-bisphosphate(in). The catalysed reaction is FMN(in) + CoA(out) = FMN(out) + CoA(in). It carries out the reaction FMN(in) + adenosine 3',5'-bisphosphate(out) = FMN(out) + adenosine 3',5'-bisphosphate(in). The enzyme catalyses FAD(out) + NAD(+)(in) = FAD(in) + NAD(+)(out). It catalyses the reaction FMN(out) + NAD(+)(in) = FMN(in) + NAD(+)(out). The catalysed reaction is NAD(+)(in) + CoA(out) = NAD(+)(out) + CoA(in). It carries out the reaction adenosine 3',5'-bisphosphate(out) + NAD(+)(in) = adenosine 3',5'-bisphosphate(in) + NAD(+)(out). The enzyme catalyses FMN(out) + ADP(in) = FMN(in) + ADP(out). It catalyses the reaction FAD(out) + ADP(in) = FAD(in) + ADP(out). The catalysed reaction is ADP(out) + CoA(in) = ADP(in) + CoA(out). It carries out the reaction adenosine 3',5'-bisphosphate(in) + ADP(out) = adenosine 3',5'-bisphosphate(out) + ADP(in). Functionally, peroxisomal transporter for multiple cofactors like coenzyme A (CoA), flavin adenine dinucleotide (FAD), flavin mononucleotide (FMN) and nucleotide adenosine monophosphate (AMP), and to a lesser extent for nicotinamide adenine dinucleotide (NAD(+)), adenosine diphosphate (ADP) and adenosine 3',5'-diphosphate (PAP). May catalyze the transport of free CoA, FAD and NAD(+) from the cytosol into the peroxisomal matrix by a counter-exchange mechanism. The polypeptide is Peroxisomal membrane protein PMP34 (Slc25a17) (Mus musculus (Mouse)).